Reading from the N-terminus, the 87-residue chain is Small ribosomal subunit protein uS15 (87 aa).

The protein belongs to the universal ribosomal protein uS15 family. As to quaternary structure, part of the 30S ribosomal subunit. Forms a bridge to the 50S subunit in the 70S ribosome, contacting the 23S rRNA.

Functionally, one of the primary rRNA binding proteins, it binds directly to 16S rRNA where it helps nucleate assembly of the platform of the 30S subunit by binding and bridging several RNA helices of the 16S rRNA. Its function is as follows. Forms an intersubunit bridge (bridge B4) with the 23S rRNA of the 50S subunit in the ribosome. This chain is Small ribosomal subunit protein uS15, found in Clostridium kluyveri (strain NBRC 12016).